The primary structure comprises 474 residues: Nuclear hormone receptor family member nhr-91 (474 aa).

Residues 50–69 (SMTPSFSQTESPNSETDDST) are disordered. Positions 51–69 (MTPSFSQTESPNSETDDST) are enriched in polar residues. Positions 97 to 172 (SKLCSVCGDK…KGMLTEAVRE (76 aa)) form a DNA-binding region, nuclear receptor. 2 NR C4-type zinc fingers span residues 100-120 (CSVC…CEGC) and 136-155 (CSQD…CQSC). The region spanning 215 to 474 (SGKKLIKELV…KNPRRLVFDE (260 aa)) is the NR LBD domain.

It belongs to the nuclear hormone receptor family.

The protein resides in the nucleus. Its function is as follows. Orphan nuclear receptor. The sequence is that of Nuclear hormone receptor family member nhr-91 (nhr-91) from Caenorhabditis elegans.